Reading from the N-terminus, the 367-residue chain is Apolipoprotein A-V (367 aa).

Residues 1–20 form the signal peptide; it reads MVAVLTWALALLSAFATAQT. Ser-56 carries the phosphoserine modification.

This sequence belongs to the apolipoprotein A1/A4/E family. Interacts with GPIHBP1. Interacts with SORL1; this interaction leads to APOA5 internalization and sorting either to lysosomes and degradation, or to the trans-Golgi network. Phosphorylated by FAM20C in the extracellular medium.

It is found in the secreted. The protein resides in the early endosome. It localises to the late endosome. Its subcellular location is the golgi apparatus. The protein localises to the trans-Golgi network. In terms of biological role, minor apolipoprotein mainly associated with HDL and to a lesser extent with VLDL. May also be associated with chylomicrons. Important determinant of plasma triglyceride (TG) levels by both being a potent stimulator of apo-CII lipoprotein lipase (LPL) TG hydrolysis and an inhibitor of the hepatic VLDL-TG production rate (without affecting the VLDL-apoB production rate). Activates poorly lecithin:cholesterol acyltransferase (LCAT) and does not enhance efflux of cholesterol from macrophages. Binds heparin. The sequence is that of Apolipoprotein A-V (APOA5) from Phoca vitulina (Harbor seal).